Consider the following 356-residue polypeptide: Nicotinate-nucleotide--dimethylbenzimidazole phosphoribosyltransferase (356 aa).

The Proton acceptor role is filled by E317.

The protein belongs to the CobT family. As to quaternary structure, homodimer.

It catalyses the reaction 5,6-dimethylbenzimidazole + nicotinate beta-D-ribonucleotide = alpha-ribazole 5'-phosphate + nicotinate + H(+). It participates in nucleoside biosynthesis; alpha-ribazole biosynthesis; alpha-ribazole from 5,6-dimethylbenzimidazole: step 1/2. Catalyzes the synthesis of alpha-ribazole-5'-phosphate from nicotinate mononucleotide (NAMN) and 5,6-dimethylbenzimidazole (DMB). In Salmonella typhi, this protein is Nicotinate-nucleotide--dimethylbenzimidazole phosphoribosyltransferase.